Here is a 518-residue protein sequence, read N- to C-terminus: DNA-binding protein D-ETS-4 (518 aa).

Disordered regions lie at residues 74-113 (SQPI…QSSP) and 152-172 (LPPS…SCGE). The segment covering 84–94 (TAPYTNPSSHQ) has biased composition (polar residues). A compositionally biased stretch (low complexity) spans 102-113 (PHSAYPSPQSSP). The segment covering 158-171 (ESNCETPSPRSSCG) has biased composition (polar residues). In terms of domain architecture, PNT spans 258 to 344 (HAKREADAIC…AQLEIWKMAY (87 aa)). Positions 393–426 (APLNGSTTSPPATNASNGGTATVKRPNGGRTGGG) are disordered. Residues 396–412 (NGSTTSPPATNASNGGT) show a composition bias toward polar residues. The ETS DNA-binding region spans 430–513 (IHLWQFLKEL…RSQRLVYQFC (84 aa)).

Belongs to the ETS family. In terms of tissue distribution, transient high expression in pole cells during embryonic stages 8-11.

It is found in the nucleus. In terms of biological role, may have a role in germline development. In Drosophila melanogaster (Fruit fly), this protein is DNA-binding protein D-ETS-4 (Ets98B).